We begin with the raw amino-acid sequence, 445 residues long: Protein phosphatase 2C 53 (445 aa).

The 312-residue stretch at 124-435 (LWGLESICGR…DNITVVVIDL (312 aa)) folds into the PPM-type phosphatase domain. The Mn(2+) site is built by aspartate 180, glycine 181, aspartate 362, and aspartate 426.

It belongs to the PP2C family. In terms of assembly, interacts with PYL10, SAPK8 and SAPK10. Binding to PYL10 is dependent on the presence of abscisic acid (ABA). Interacts with PYL3, PYL5, PYL9 and PYL10. Binding to PYL9 and PYL10 is dependent on the presence of ABA. It depends on Mg(2+) as a cofactor. Mn(2+) is required as a cofactor. As to expression, expressed in leaf blades, leaf sheaths and lamina joints. Expressed at low levels in roots, stems, flowers and panicles.

Its subcellular location is the cytoplasm. It is found in the cytosol. It localises to the nucleus. The enzyme catalyses O-phospho-L-seryl-[protein] + H2O = L-seryl-[protein] + phosphate. It carries out the reaction O-phospho-L-threonyl-[protein] + H2O = L-threonyl-[protein] + phosphate. With respect to regulation, repressed by abscisic acid-bound PYL1. Functionally, protein phosphatase that acts as a negative regulator of abscisic acid (ABA) signaling. Involved in the regulation of root architecture development and drought resistance. Can dephosphorylate SAPK8 and SAPK10 in vitro. Together with PYL10, SAPK8 and SAPK10, may form an ABA signaling module involved in stress response. The sequence is that of Protein phosphatase 2C 53 from Oryza sativa subsp. japonica (Rice).